Consider the following 224-residue polypeptide: UPF0758 protein PST_0473 (224 aa).

The 123-residue stretch at 102–224 folds into the MPN domain; it reads ALESPQAVRD…PLSMAEYGWM (123 aa). The Zn(2+) site is built by histidine 173, histidine 175, and aspartate 186. Positions 173 to 186 match the JAMM motif motif; it reads HNHPSGVAEPSQAD.

The protein belongs to the UPF0758 family.

This is UPF0758 protein PST_0473 from Stutzerimonas stutzeri (strain A1501) (Pseudomonas stutzeri).